A 379-amino-acid polypeptide reads, in one-letter code: 3-dehydroquinate synthase (379 aa).

NAD(+) contacts are provided by residues 67–72, 101–105, 125–126, Lys-138, and Lys-147; these read PGEKNK, GIILD, and TT. Positions 180, 242, and 258 each coordinate Zn(2+).

It belongs to the sugar phosphate cyclases superfamily. Dehydroquinate synthase family. NAD(+) is required as a cofactor. It depends on Co(2+) as a cofactor. Requires Zn(2+) as cofactor.

It is found in the cytoplasm. It catalyses the reaction 7-phospho-2-dehydro-3-deoxy-D-arabino-heptonate = 3-dehydroquinate + phosphate. The protein operates within metabolic intermediate biosynthesis; chorismate biosynthesis; chorismate from D-erythrose 4-phosphate and phosphoenolpyruvate: step 2/7. Catalyzes the conversion of 3-deoxy-D-arabino-heptulosonate 7-phosphate (DAHP) to dehydroquinate (DHQ). The polypeptide is 3-dehydroquinate synthase (Chlamydia caviae (strain ATCC VR-813 / DSM 19441 / 03DC25 / GPIC) (Chlamydophila caviae)).